The following is a 211-amino-acid chain: Small ribosomal subunit protein uS5 (211 aa).

In terms of domain architecture, S5 DRBM spans 51–114; that stretch reads LKHEVLDVSL…ANAKLNITPV (64 aa).

It belongs to the universal ribosomal protein uS5 family. Part of the 30S ribosomal subunit. Contacts protein S4.

In terms of biological role, with S4 and S12 plays an important role in translational accuracy. The chain is Small ribosomal subunit protein uS5 from Ignicoccus hospitalis (strain KIN4/I / DSM 18386 / JCM 14125).